Here is a 2089-residue protein sequence, read N- to C-terminus: Mediator of DNA damage checkpoint protein 1 (2089 aa).

A compositionally biased stretch (acidic residues) spans methionine 1–glutamine 19. The interval methionine 1 to glutamate 22 is disordered. Residues methionine 1–threonine 150 form an interaction with CHEK2 region. The interaction with the MRN complex stretch occupies residues glutamate 2 to threonine 220. Threonine 4 is subject to Phosphothreonine; by ATM. Positions asparagine 54–lysine 105 constitute an FHA domain. A Phosphoserine modification is found at serine 108. A required for nuclear localization (NLS1) region spans residues leucine 145–glutamate 568. Threonine 146 is subject to Phosphothreonine. At serine 168 the chain carries Phosphoserine; by CK2. At serine 176 the chain carries Phosphoserine. Disordered regions lie at residues arginine 185–serine 248, aspartate 261–asparagine 280, and glycine 286–histidine 317. Serine 196 and serine 218 each carry phosphoserine; by CK2. Threonine 220 carries the phosphothreonine; by CK2 modification. Positions aspartate 261–valine 274 are enriched in basic and acidic residues. Serine 299 bears the Phosphoserine; by CK2 mark. Threonine 301 bears the Phosphothreonine; by CK2 mark. Residues aspartate 306–histidine 317 show a composition bias toward basic and acidic residues. The residue at position 329 (serine 329) is a Phosphoserine; by CK2. A Phosphothreonine; by CK2 modification is found at threonine 331. Phosphoserine is present on serine 372. Phosphoserine; by CK2 is present on serine 376. Threonine 378 carries the phosphothreonine; by CK2 modification. Phosphoserine occurs at positions 394 and 397. Position 402 is a phosphoserine; by CK2 (serine 402). Position 404 is a phosphothreonine; by CK2 (threonine 404). Serine 411 carries the post-translational modification Phosphoserine. A Phosphothreonine modification is found at threonine 449. Serine 453 is modified (phosphoserine; by CK2). Threonine 455 bears the Phosphothreonine; by CK2 mark. A disordered region spans residues arginine 482–alanine 515. A phosphoserine mark is found at serine 485, serine 495, serine 498, serine 504, serine 505, and serine 513. A Phosphothreonine modification is found at threonine 523. Serine 590 carries the post-translational modification Phosphoserine. Residue lysine 616 forms a Glycyl lysine isopeptide (Lys-Gly) (interchain with G-Cter in SUMO1); alternate linkage. Lysine 616 participates in a covalent cross-link: Glycyl lysine isopeptide (Lys-Gly) (interchain with G-Cter in SUMO2); alternate. 2 disordered regions span residues aspartate 653–glycine 689 and serine 780–asparagine 1887. The segment covering glycine 671–glutamate 685 has biased composition (basic and acidic residues). Residues serine 780 and serine 793 each carry the phosphoserine modification. Residue lysine 812 is modified to N6-acetyllysine. Basic and acidic residues-rich tracts occupy residues glutamate 819–threonine 844, glutamate 851–lysine 862, aspartate 868–valine 905, and alanine 914–proline 951. Serine 955 and serine 998 each carry phosphoserine. Residues serine 955–proline 965 are compositionally biased toward polar residues. The span at lysine 1016 to glutamine 1031 shows a compositional bias: basic and acidic residues. A Phosphoserine modification is found at serine 1033. Residues proline 1040 to lysine 1051 are compositionally biased toward pro residues. Residues serine 1068 and serine 1086 each carry the phosphoserine modification. Positions proline 1103 to serine 1113 are enriched in basic residues. The span at proline 1129–lysine 1156 shows a compositional bias: polar residues. The tract at residues serine 1148–glutamate 1610 is interaction with the PRKDC complex. Phosphothreonine is present on threonine 1157. Residues glutamine 1169–threonine 1187 are compositionally biased toward polar residues. A Phosphothreonine modification is found at threonine 1198. Over residues glutamine 1210–threonine 1228 the composition is skewed to polar residues. Position 1235 is a phosphoserine (serine 1235). Threonine 1239 carries the post-translational modification Phosphothreonine. The segment covering glutamine 1251 to alanine 1268 has biased composition (polar residues). Phosphothreonine occurs at positions 1280 and 1302. Composition is skewed to low complexity over residues lysine 1304 to serine 1318 and threonine 1347 to serine 1359. Polar residues predominate over residues proline 1375–alanine 1391. Serine 1399 and serine 1400 each carry phosphoserine. At lysine 1402 the chain carries N6-acetyllysine. Residue threonine 1403 is modified to Phosphothreonine. A Glycyl lysine isopeptide (Lys-Gly) (interchain with G-Cter in SUMO1); alternate cross-link involves residue lysine 1413. Lysine 1413 participates in a covalent cross-link: Glycyl lysine isopeptide (Lys-Gly) (interchain with G-Cter in SUMO2); alternate. Polar residues-rich tracts occupy residues proline 1416–threonine 1444, glutamine 1456–arginine 1475, alanine 1498–threonine 1514, and glutamine 1538–alanine 1555. A phosphothreonine mark is found at threonine 1425 and threonine 1466. Threonine 1548 is subject to Phosphothreonine. Serine 1564 carries the phosphoserine modification. A phosphothreonine mark is found at threonine 1567 and threonine 1589. Residues glutamine 1579–alanine 1596 show a composition bias toward polar residues. Serine 1604 bears the Phosphoserine mark. Phosphothreonine is present on threonine 1608. Residues proline 1611–histidine 1620 show a composition bias toward pro residues. The segment covering serine 1624–arginine 1636 has biased composition (polar residues). Threonine 1630, threonine 1664, and threonine 1671 each carry phosphothreonine. The span at glycine 1678 to valine 1689 shows a compositional bias: polar residues. Residue serine 1681 is modified to Phosphoserine. Position 1697 is a phosphothreonine (threonine 1697). Positions proline 1698–serine 1719 are enriched in polar residues. Positions proline 1698–threonine 2089 are required for nuclear localization (NLS2). A phosphoserine mark is found at serine 1702 and serine 1711. Lysine 1740 participates in a covalent cross-link: Glycyl lysine isopeptide (Lys-Gly) (interchain with G-Cter in SUMO2). A Phosphoserine modification is found at serine 1775. A Glycyl lysine isopeptide (Lys-Gly) (interchain with G-Cter in SUMO2) cross-link involves residue lysine 1790. At threonine 1800 the chain carries Phosphothreonine. The residue at position 1820 (serine 1820) is a Phosphoserine. Polar residues predominate over residues histidine 1823–threonine 1836. Lysine 1840 participates in a covalent cross-link: Glycyl lysine isopeptide (Lys-Gly) (interchain with G-Cter in SUMO1); alternate. A Glycyl lysine isopeptide (Lys-Gly) (interchain with G-Cter in SUMO2); alternate cross-link involves residue lysine 1840. The segment covering alanine 1847–valine 1857 has biased composition (basic and acidic residues). Residue threonine 1858 is modified to Phosphothreonine. 2 BRCT domains span residues alanine 1892–valine 1970 and arginine 1991–serine 2082. Omega-N-methylarginine is present on arginine 1943.

As to quaternary structure, homodimer. Interacts with H2AX, which requires phosphorylation of H2AX on 'Ser-139'. Interacts with the MRN complex, composed of MRE11, RAD50, and NBN. Interacts with CHEK2, which requires ATM-mediated phosphorylation of 'Thr-68' within the FHA domain of CHEK2. Interacts constitutively with the BRCA1-BARD1 complex, SMC1A and TP53BP1. Interacts with ATM and FANCD2, and these interactions are reduced upon DNA damage. Also interacts with the PRKDC complex, composed of XRCC6/KU70, XRCC5/KU80 and PRKDC/XRCC7. This interaction may be required for PRKDC autophosphorylation, which is essential for DNA double strand break (DSB) repair. When phosphorylated by ATM, interacts with RNF8 (via FHA domain). Interacts with CEP164. When phosphorylated, interacts with APTX (via FHA-like domain). Interacts (when phosphorylated) with TOPBP1; promoting TOPBP1 localization to DNA damage sites during mitosis. Interacts (when phosphorylated) with NBN; promoting NBN and MRN complex localization to DNA damage sites. Post-translationally, phosphorylated upon exposure to ionizing radiation (IR), ultraviolet radiation (UV), and hydroxyurea (HU). Phosphorylation in response to IR requires ATM, NBN, and possibly CHEK2. Also phosphorylated during the G2/M phase of the cell cycle and during activation of the mitotic spindle checkpoint. Phosphorylation at Thr-4 by ATM stabilizes and enhances homodimerization via the FHA domain. Phosphorylated at Ser-168 and Ser-196 by CK2 in response to DNA damage during mitosis, promoting interaction with TOPBP1. Phosphorylated by CK2 in response to DNA damage, promoting interaction with NBN and recruitment of the MRN complex to DNA damage sites. Sumoylation at Lys-1840 by PIAS4 following DNA damage promotes ubiquitin-mediated degradation. In terms of processing, ubiquitinated by RNF4, leading to proteasomal degradation; undergoes 'Lys-48'-linked polyubiquitination. In terms of tissue distribution, highly expressed in testis.

It is found in the nucleus. The protein resides in the chromosome. Its function is as follows. Histone reader protein required for checkpoint-mediated cell cycle arrest in response to DNA damage within both the S phase and G2/M phases of the cell cycle. Specifically recognizes and binds histone H2AX phosphorylated at 'Ser-139', a marker of DNA damage, serving as a scaffold for the recruitment of DNA repair and signal transduction proteins to discrete foci of DNA damage sites. Also required for downstream events subsequent to the recruitment of these proteins. These include phosphorylation and activation of the ATM, CHEK1 and CHEK2 kinases, and stabilization of TP53/p53 and apoptosis. ATM and CHEK2 may also be activated independently by a parallel pathway mediated by TP53BP1. Required for chromosomal stability during mitosis by promoting recruitment of TOPBP1 to DNA double strand breaks (DSBs): TOPBP1 forms filamentous assemblies that bridge MDC1 and tether broken chromosomes during mitosis. Required for the repair of DSBs via homologous recombination by promoting recruitment of NBN component of the MRN complex to DSBs. In Homo sapiens (Human), this protein is Mediator of DNA damage checkpoint protein 1.